Here is a 208-residue protein sequence, read N- to C-terminus: Small ribosomal subunit protein eS8 (208 aa).

Residues M1–Y27 are disordered. A lipid anchor (N-myristoyl glycine) is attached at G2. The span at W8–K26 shows a compositional bias: basic residues. N6-acetyllysine occurs at positions 37 and 128. At T130 the chain carries Phosphothreonine. At S160 the chain carries Phosphoserine. Residues K170 and K193 each participate in a glycyl lysine isopeptide (Lys-Gly) (interchain with G-Cter in SUMO2) cross-link.

The protein belongs to the eukaryotic ribosomal protein eS8 family. Component of the small ribosomal subunit. Identified in a IGF2BP1-dependent mRNP granule complex containing untranslated mRNAs. Part of the small subunit (SSU) processome, composed of more than 70 proteins and the RNA chaperone small nucleolar RNA (snoRNA) U3.

Its subcellular location is the cytoplasm. The protein resides in the membrane. It is found in the nucleus. It localises to the nucleolus. Functionally, component of the small ribosomal subunit. The ribosome is a large ribonucleoprotein complex responsible for the synthesis of proteins in the cell. Part of the small subunit (SSU) processome, first precursor of the small eukaryotic ribosomal subunit. During the assembly of the SSU processome in the nucleolus, many ribosome biogenesis factors, an RNA chaperone and ribosomal proteins associate with the nascent pre-rRNA and work in concert to generate RNA folding, modifications, rearrangements and cleavage as well as targeted degradation of pre-ribosomal RNA by the RNA exosome. The protein is Small ribosomal subunit protein eS8 (RPS8) of Oryctolagus cuniculus (Rabbit).